Reading from the N-terminus, the 385-residue chain is ATP phosphoribosyltransferase regulatory subunit (385 aa).

The protein belongs to the class-II aminoacyl-tRNA synthetase family. HisZ subfamily. Heteromultimer composed of HisG and HisZ subunits.

The protein localises to the cytoplasm. The protein operates within amino-acid biosynthesis; L-histidine biosynthesis; L-histidine from 5-phospho-alpha-D-ribose 1-diphosphate: step 1/9. In terms of biological role, required for the first step of histidine biosynthesis. May allow the feedback regulation of ATP phosphoribosyltransferase activity by histidine. This chain is ATP phosphoribosyltransferase regulatory subunit, found in Bordetella parapertussis (strain 12822 / ATCC BAA-587 / NCTC 13253).